Reading from the N-terminus, the 459-residue chain is uncharacterized protein (459 aa).

Residues 28 to 47 (AHDEELTGPPQKPAYAAKPA) are disordered. Residues 35–214 (GPPQKPAYAA…TEVIVKLHPR (180 aa)) enclose the FAD-binding PCMH-type domain.

The protein belongs to the oxygen-dependent FAD-linked oxidoreductase family. The cofactor is FAD.

This is an uncharacterized protein from Mycobacterium tuberculosis (strain CDC 1551 / Oshkosh).